We begin with the raw amino-acid sequence, 388 residues long: Carbamoyl phosphate synthase small chain (388 aa).

The interval 1–194 (MAQNPLSKPT…WPEGYARQEA (194 aa)) is CPSase. Positions 53, 246, and 248 each coordinate L-glutamine. One can recognise a Glutamine amidotransferase type-1 domain in the interval 198–387 (KVVAIDYGAK…AAAMDAQKAE (190 aa)). Cysteine 276 functions as the Nucleophile in the catalytic mechanism. Residues leucine 277, glutamine 280, asparagine 318, glycine 320, and phenylalanine 321 each coordinate L-glutamine. Catalysis depends on residues histidine 360 and glutamate 362.

Belongs to the CarA family. Composed of two chains; the small (or glutamine) chain promotes the hydrolysis of glutamine to ammonia, which is used by the large (or ammonia) chain to synthesize carbamoyl phosphate. Tetramer of heterodimers (alpha,beta)4.

The enzyme catalyses hydrogencarbonate + L-glutamine + 2 ATP + H2O = carbamoyl phosphate + L-glutamate + 2 ADP + phosphate + 2 H(+). The catalysed reaction is L-glutamine + H2O = L-glutamate + NH4(+). Its pathway is amino-acid biosynthesis; L-arginine biosynthesis; carbamoyl phosphate from bicarbonate: step 1/1. It participates in pyrimidine metabolism; UMP biosynthesis via de novo pathway; (S)-dihydroorotate from bicarbonate: step 1/3. In terms of biological role, small subunit of the glutamine-dependent carbamoyl phosphate synthetase (CPSase). CPSase catalyzes the formation of carbamoyl phosphate from the ammonia moiety of glutamine, carbonate, and phosphate donated by ATP, constituting the first step of 2 biosynthetic pathways, one leading to arginine and/or urea and the other to pyrimidine nucleotides. The small subunit (glutamine amidotransferase) binds and cleaves glutamine to supply the large subunit with the substrate ammonia. The sequence is that of Carbamoyl phosphate synthase small chain from Ruegeria pomeroyi (strain ATCC 700808 / DSM 15171 / DSS-3) (Silicibacter pomeroyi).